A 520-amino-acid polypeptide reads, in one-letter code: AMP-binding domain-containing enzyme iboA (520 aa).

180–191 (LTSGSTSGSPKV) is a binding site for ATP. Positions 397–447 (DGNFHTGDLFEKQLDGSYLFRGRGDDWIKSEDSRFIDTKAIEEKINDVCSD) match the FACS motif.

It belongs to the ATP-dependent AMP-binding enzyme family. Mg(2+) is required as a cofactor.

The protein operates within secondary metabolite biosynthesis. In terms of biological role, AMP-binding domain-containing enzyme; part of the gene cluster that mediates the biosynthesis of the psychoactive metabolites ibotenic acid and muscimol. The first committed step is glutamate hydroxylation by the 2-oxoglutarate-dependent dioxygenase iboH, and the last step is decarboxylation of ibotenic acid to muscimol by the decarboxylase iboD. The order of the intermediate reactions is somewhat ambiguous. IboA likely activates the carboxylic acid at position 5 to introduce an amide bond, and the flavin monooxygenase iboF generates the N-O bond. There are several options for the latter step. One option is that iboF directly hydroxylates the amide nitrogen formed by iboA to produce a hydroxamic acid species. Another option is that iboF hydroxylates an external N-containing compound, whose resulting N-O bond is subsequently introduced into the hydroxyglutamate scaffold. The paralogous PLP-dependent cystathionine gamma-synthase-like enzymes iboG1 and iboG2 are likely involved in substitution of the OH group at position 3 by the O-N moiety. The first cyclic intermediate is most probably tricholomic acid which is likely desaturated to ibotenic acid by the cytochrome P450 monooxygenase iboC. The chain is AMP-binding domain-containing enzyme iboA from Amanita muscaria (strain Koide BX008).